We begin with the raw amino-acid sequence, 1177 residues long: MTGQLVQYGRHRQRRSYARISEVLELPNLIEIQTSSYQWFLDEGLREMFQDISPIEDFTGNLSLEFIDYSLGEPKYSVDECKERDVTYAAPLRVKVRLINKETGEVKEQDVFMGDFPLMTETGTFVINGAERVIVSQLVRSPSVYYSGKVDKNGKRGFTATVIPNRGAWLEYETDAKDVVYVRIDRTRKLPVTVLLRALGFGSDQEITELLGDNEYLSNTLEKDNTDSTEKALLEIYERLRPGEPPTVENAKSLLVSRFFDPKRYDLANVGRYKINKKLHIKNRLFNQRLAETLVDPETGEILAAEGTILDRRTLDRILPYLEKNIGFKTAKPMGGVVEGDVELQSIKIYAPESEGERVINVIGNANITRDVKHITPGDILASISYFFNLLYKVGDTDDIDHLGNRRLRSVGELLQNQFRIGLSRMERVVRERMSIQDTNAITPQALINIRPVIASIKEFFGSSQLSQFMDQTNPLAELTHKRRLSALGPGGLTRERAGFEVRDVHYSHYGRMCPIETPEGPNIGLINSLSSFAKVNEFGFIETPYRRVDPETGLVTGHVDYLTADEEDNYVVAQANMKLSDEGEFLSEDIVARFRGENIVTNRERIDYMDVSPKQVVSAATACIPFLENDDSNRALMGANMQRQAVPLMNPESPIVGTGMEYVSAKDSGAAVICKHPGVVERVEAREVWVRRYVEVDGQTVKGDLDRYKMQKFIRSNQGTCYNQRPIVSVGNEVVKGEILADGPSMELGELALGRNVLVGFMTWDGYNYEDAIIMSERLVKDDVYTSIHIEEYESEARDTKLGPEEITRDIPNVGEDALRNLDERGIIRVGAEVKDGDLLVGKVTPKGVTELTAEERLLHAIFGEKAREVRDTSLRVPHGGGGIILDVKVFNREDGDELPPGVNQLVRAYIVQKRKISEGDKMAGRHGNKGVISRILPEEDMPYLPDGTPIDIMLNPLGVPSRMNIGQVLELHLGMAARYLGIHIATPVFDGAREEDVWGTIEEAGMANDAKTILYDGRTGEPFDNRVSVGVMYMIKLAHMVDDKLHARSTGPYSLVTQQPLGGKAQFGGQRFGEMEVWALEAYGAAYTLQEILTVKSDDVVGRVKTYEAIVKGENVPEPGVPESFKVLIKELQSLGMDVKMMSSDDTEIEMRDTEDDDDHQSADKLNVEVETTKE.

Over residues 1147 to 1161 (DDTEIEMRDTEDDDD) the composition is skewed to acidic residues. Residues 1147 to 1177 (DDTEIEMRDTEDDDDHQSADKLNVEVETTKE) are disordered. The span at 1162–1177 (HQSADKLNVEVETTKE) shows a compositional bias: basic and acidic residues.

The protein belongs to the RNA polymerase beta chain family. The RNAP catalytic core consists of 2 alpha, 1 beta, 1 beta' and 1 omega subunit. When a sigma factor is associated with the core the holoenzyme is formed, which can initiate transcription.

The catalysed reaction is RNA(n) + a ribonucleoside 5'-triphosphate = RNA(n+1) + diphosphate. In terms of biological role, DNA-dependent RNA polymerase catalyzes the transcription of DNA into RNA using the four ribonucleoside triphosphates as substrates. The sequence is that of DNA-directed RNA polymerase subunit beta from Bacillus cereus (strain G9842).